Consider the following 128-residue polypeptide: Mini-ribonuclease 3 (128 aa).

Asp17 is a catalytic residue.

Belongs to the MrnC RNase family. In terms of assembly, homodimer. The cofactor is Mg(2+).

The protein localises to the cytoplasm. Involved in correct processing of both the 5' and 3' ends of 23S rRNA precursor. Processes 30S rRNA precursor transcript even in absence of ribonuclease 3 (Rnc); Rnc processes 30S rRNA into smaller rRNA precursors. The sequence is that of Mini-ribonuclease 3 from Streptococcus pneumoniae (strain ATCC BAA-255 / R6).